We begin with the raw amino-acid sequence, 153 residues long: Nucleoside diphosphate kinase 3 (153 aa).

Positions 11, 59, 87, 93, 104, and 114 each coordinate ATP. Histidine 117 acts as the Pros-phosphohistidine intermediate in catalysis.

This sequence belongs to the NDK family. In terms of assembly, homohexamer. The cofactor is Mg(2+).

It is found in the plastid. The protein resides in the chloroplast thylakoid lumen. The catalysed reaction is a 2'-deoxyribonucleoside 5'-diphosphate + ATP = a 2'-deoxyribonucleoside 5'-triphosphate + ADP. The enzyme catalyses a ribonucleoside 5'-diphosphate + ATP = a ribonucleoside 5'-triphosphate + ADP. Major role in the synthesis of nucleoside triphosphates other than ATP. The ATP gamma phosphate is transferred to the NDP beta phosphate via a ping-pong mechanism, using a phosphorylated active-site intermediate. Shows the highest specificity towards GDP. The sequence is that of Nucleoside diphosphate kinase 3 from Spinacia oleracea (Spinach).